The sequence spans 140 residues: Small ribosomal subunit protein uS12 (140 aa).

3-methylthioaspartic acid is present on Asp102. Positions Ala121 to Lys140 are disordered. Positions Tyr130–Lys140 are enriched in basic residues.

This sequence belongs to the universal ribosomal protein uS12 family. Part of the 30S ribosomal subunit. Contacts proteins S8 and S17. May interact with IF1 in the 30S initiation complex.

With S4 and S5 plays an important role in translational accuracy. In terms of biological role, interacts with and stabilizes bases of the 16S rRNA that are involved in tRNA selection in the A site and with the mRNA backbone. Located at the interface of the 30S and 50S subunits, it traverses the body of the 30S subunit contacting proteins on the other side and probably holding the rRNA structure together. The combined cluster of proteins S8, S12 and S17 appears to hold together the shoulder and platform of the 30S subunit. This chain is Small ribosomal subunit protein uS12, found in Alkaliphilus oremlandii (strain OhILAs) (Clostridium oremlandii (strain OhILAs)).